Here is a 134-residue protein sequence, read N- to C-terminus: Large ribosomal subunit protein uL18 (134 aa).

This sequence belongs to the universal ribosomal protein uL18 family. As to quaternary structure, part of the 50S ribosomal subunit; part of the 5S rRNA/L5/L18/L25 subcomplex. Contacts the 5S and 23S rRNAs.

In terms of biological role, this is one of the proteins that bind and probably mediate the attachment of the 5S RNA into the large ribosomal subunit, where it forms part of the central protuberance. The protein is Large ribosomal subunit protein uL18 of Corynebacterium glutamicum (strain ATCC 13032 / DSM 20300 / JCM 1318 / BCRC 11384 / CCUG 27702 / LMG 3730 / NBRC 12168 / NCIMB 10025 / NRRL B-2784 / 534).